A 417-amino-acid polypeptide reads, in one-letter code: NADH-quinone oxidoreductase subunit D (417 aa).

It belongs to the complex I 49 kDa subunit family. As to quaternary structure, NDH-1 is composed of 14 different subunits. Subunits NuoB, C, D, E, F, and G constitute the peripheral sector of the complex.

The protein localises to the cell inner membrane. It catalyses the reaction a quinone + NADH + 5 H(+)(in) = a quinol + NAD(+) + 4 H(+)(out). Its function is as follows. NDH-1 shuttles electrons from NADH, via FMN and iron-sulfur (Fe-S) centers, to quinones in the respiratory chain. The immediate electron acceptor for the enzyme in this species is believed to be ubiquinone. Couples the redox reaction to proton translocation (for every two electrons transferred, four hydrogen ions are translocated across the cytoplasmic membrane), and thus conserves the redox energy in a proton gradient. In Acidithiobacillus ferrooxidans (strain ATCC 53993 / BNL-5-31) (Leptospirillum ferrooxidans (ATCC 53993)), this protein is NADH-quinone oxidoreductase subunit D.